The following is a 281-amino-acid chain: Bifunctional protein FolD (281 aa).

Residues 165–167 (GRG), T192, and V233 contribute to the NADP(+) site.

It belongs to the tetrahydrofolate dehydrogenase/cyclohydrolase family. As to quaternary structure, homodimer.

It catalyses the reaction (6R)-5,10-methylene-5,6,7,8-tetrahydrofolate + NADP(+) = (6R)-5,10-methenyltetrahydrofolate + NADPH. It carries out the reaction (6R)-5,10-methenyltetrahydrofolate + H2O = (6R)-10-formyltetrahydrofolate + H(+). The protein operates within one-carbon metabolism; tetrahydrofolate interconversion. Catalyzes the oxidation of 5,10-methylenetetrahydrofolate to 5,10-methenyltetrahydrofolate and then the hydrolysis of 5,10-methenyltetrahydrofolate to 10-formyltetrahydrofolate. The polypeptide is Bifunctional protein FolD (Mycobacterium tuberculosis (strain ATCC 25177 / H37Ra)).